The following is a 102-amino-acid chain: Putative RNA-binding protein RbpA (102 aa).

The 78-residue stretch at 2–79 folds into the RRM domain; that stretch reads SIYVGNLSYE…RDLKVNKAKP (78 aa). Over residues 73-84 the composition is skewed to basic and acidic residues; that stretch reads KVNKAKPREDRG. The tract at residues 73–102 is disordered; that stretch reads KVNKAKPREDRGPSGGNRGGYGGGGGRNRY. Positions 85–102 are enriched in gly residues; sequence PSGGNRGGYGGGGGRNRY.

The protein is Putative RNA-binding protein RbpA (rbpA) of Nostoc sp. (strain PCC 7120 / SAG 25.82 / UTEX 2576).